Reading from the N-terminus, the 500-residue chain is L-arabinose isomerase (500 aa).

4 residues coordinate Mn(2+): E306, E333, H350, and H450.

The protein belongs to the arabinose isomerase family. In terms of assembly, homohexamer. Mn(2+) serves as cofactor.

The catalysed reaction is beta-L-arabinopyranose = L-ribulose. Its pathway is carbohydrate degradation; L-arabinose degradation via L-ribulose; D-xylulose 5-phosphate from L-arabinose (bacterial route): step 1/3. Its function is as follows. Catalyzes the conversion of L-arabinose to L-ribulose. This chain is L-arabinose isomerase, found in Escherichia coli O6:H1 (strain CFT073 / ATCC 700928 / UPEC).